Here is a 479-residue protein sequence, read N- to C-terminus: UDP-glycosyltransferase 85A8 (479 aa).

UDP-alpha-D-glucose contacts are provided by residues Ser-302, Trp-358–Cys-359, His-376–Glu-384, and Phe-398–Gln-401.

This sequence belongs to the UDP-glycosyltransferase family.

May glycosylate diterpenes or flavonols in leaves. In Stevia rebaudiana (Stevia), this protein is UDP-glycosyltransferase 85A8.